A 258-amino-acid chain; its full sequence is GTP cyclohydrolase FolE2 (258 aa).

This sequence belongs to the GTP cyclohydrolase IV family.

The enzyme catalyses GTP + H2O = 7,8-dihydroneopterin 3'-triphosphate + formate + H(+). The protein operates within cofactor biosynthesis; 7,8-dihydroneopterin triphosphate biosynthesis; 7,8-dihydroneopterin triphosphate from GTP: step 1/1. Converts GTP to 7,8-dihydroneopterin triphosphate. The polypeptide is GTP cyclohydrolase FolE2 (Lawsonia intracellularis (strain PHE/MN1-00)).